Reading from the N-terminus, the 549-residue chain is Chaperonin GroEL (549 aa).

ATP is bound by residues 29–32 (TLGP), Lys50, 86–90 (DGTTT), Gly414, 477–479 (NAL), and Asp493.

It belongs to the chaperonin (HSP60) family. In terms of assembly, forms a cylinder of 14 subunits composed of two heptameric rings stacked back-to-back. Interacts with the co-chaperonin GroES.

Its subcellular location is the cytoplasm. The enzyme catalyses ATP + H2O + a folded polypeptide = ADP + phosphate + an unfolded polypeptide.. Together with its co-chaperonin GroES, plays an essential role in assisting protein folding. The GroEL-GroES system forms a nano-cage that allows encapsulation of the non-native substrate proteins and provides a physical environment optimized to promote and accelerate protein folding. The sequence is that of Chaperonin GroEL from Leptospira biflexa serovar Patoc (strain Patoc 1 / Ames).